The sequence spans 350 residues: Serine/arginine-rich splicing factor RS40 (350 aa).

RRM domains are found at residues 2–74 (KPVF…WTKS) and 97–168 (KTLF…YAVK). 2 stretches are compositionally biased toward basic and acidic residues: residues 73-82 (KSERGGDKRS) and 167-187 (VKDDDARGNGHSPERRRDRSP). Disordered regions lie at residues 73–94 (KSERGGDKRSGGGSRRSSSSMR) and 167–350 (VKDD…PADE). Serine 193, serine 195, and serine 211 each carry phosphoserine. Composition is skewed to basic and acidic residues over residues 216-227 (YRKERTSPDYGR) and 240-255 (GSPEYGRDRRGNDSPR). 7 positions are modified to phosphoserine: serine 241, serine 262, serine 278, serine 298, serine 308, serine 335, and serine 340. Residues 272-289 (NKRERMSPNHSPFKKESP) are compositionally biased toward basic and acidic residues. The span at 299–308 (PIERRERSRS) shows a compositional bias: basic and acidic residues.

The protein belongs to the splicing factor SR family. RS subfamily. Component of the spliceosome. Interacts with SNRNP35. Interacts with CYP59. Interacts with RCF3 and CPL1. Interacts with DRB1/HYL1 and SE. As to expression, highly expressed in roots and flowers. A presumably longer alternatively spliced form is found in leaves, stems and flowers.

It is found in the nucleus. Its subcellular location is the nucleus speckle. Its function is as follows. Required for constitutive and alternative pre-mRNA splicing. Involved in primary miRNA processing and pri-miRNA biogenesis. Binds both intronless and intron-containing pri-miRNAs. The polypeptide is Serine/arginine-rich splicing factor RS40 (RS40) (Arabidopsis thaliana (Mouse-ear cress)).